The following is an 81-amino-acid chain: YcgL domain-containing protein Tgr7_3126 (81 aa).

The YcgL domain occupies Met-1–Leu-81.

This chain is YcgL domain-containing protein Tgr7_3126, found in Thioalkalivibrio sulfidiphilus (strain HL-EbGR7).